Reading from the N-terminus, the 446-residue chain is 23S rRNA (uracil(1939)-C(5))-methyltransferase RlmD (446 aa).

Residues 6–64 enclose the TRAM domain; sequence KKLPQESITCEIESLSHEGRGVSHKDGKTLFVEGALPGETVTARYVNSRRSYDELAVEE. C77, C83, C86, and C165 together coordinate [4Fe-4S] cluster. Q275, F304, N309, E325, D352, and D377 together coordinate S-adenosyl-L-methionine. C403 acts as the Nucleophile in catalysis.

The protein belongs to the class I-like SAM-binding methyltransferase superfamily. RNA M5U methyltransferase family. RlmD subfamily.

The catalysed reaction is uridine(1939) in 23S rRNA + S-adenosyl-L-methionine = 5-methyluridine(1939) in 23S rRNA + S-adenosyl-L-homocysteine + H(+). Functionally, catalyzes the formation of 5-methyl-uridine at position 1939 (m5U1939) in 23S rRNA. The protein is 23S rRNA (uracil(1939)-C(5))-methyltransferase RlmD of Hahella chejuensis (strain KCTC 2396).